A 312-amino-acid polypeptide reads, in one-letter code: Glycine--tRNA ligase alpha subunit (312 aa).

Belongs to the class-II aminoacyl-tRNA synthetase family. In terms of assembly, tetramer of two alpha and two beta subunits.

It is found in the cytoplasm. It catalyses the reaction tRNA(Gly) + glycine + ATP = glycyl-tRNA(Gly) + AMP + diphosphate. This is Glycine--tRNA ligase alpha subunit from Thiobacillus denitrificans (strain ATCC 25259 / T1).